We begin with the raw amino-acid sequence, 1013 residues long: A-type ATP synthase subunit A (1013 aa).

A DOD-type homing endonuclease domain is found at 392–525 (FLGYVIGDGT…LTYLLAKLGI (134 aa)).

The protein belongs to the ATPase alpha/beta chains family. As to quaternary structure, has multiple subunits with at least A(3), B(3), C, D, E, F, H, I and proteolipid K(x). In terms of processing, this protein undergoes a protein self splicing that involves a post-translational excision of the VDE intervening region (intein) followed by peptide ligation.

Its subcellular location is the cell membrane. The enzyme catalyses ATP + H2O + 4 H(+)(in) = ADP + phosphate + 5 H(+)(out). In terms of biological role, component of the A-type ATP synthase that produces ATP from ADP in the presence of a proton gradient across the membrane. The A chain is the catalytic subunit. This chain is A-type ATP synthase subunit A, found in Pyrococcus furiosus (strain ATCC 43587 / DSM 3638 / JCM 8422 / Vc1).